A 484-amino-acid chain; its full sequence is Sodium-dependent glucose transporter 1 (484 aa).

At Ser6 the chain carries Phosphoserine. 12 helical membrane-spanning segments follow: residues 40–60, 80–100, 106–126, 135–155, 168–188, 227–247, 274–294, 317–337, 340–360, 366–386, 401–421, and 428–448; these read WFTT…AAVL, EIFV…GVLF, FLLL…TPFC, MMSI…VLIL, ALHF…KLAW, LLWA…FLFA, ALLC…VTYG, SIFW…ATLL, GTMM…LVLF, CLWI…PSGI, AFIL…SGIL, and LPVI…LFPV.

This sequence belongs to the major facilitator superfamily. In terms of tissue distribution, expressed in brain, liver, lung, and kidney. In kidney expressed in cortex and inner medulla, in ascending thin limbs (ATLs) and lower descending thin limbs (DTLs). Primarily expressed in the proximal tubules of the kidney.

Its subcellular location is the apical cell membrane. In terms of biological role, may function as a sodium-dependent glucose transporter. Potential channels for urea in the inner medulla of kidney. This Rattus norvegicus (Rat) protein is Sodium-dependent glucose transporter 1.